Here is a 280-residue protein sequence, read N- to C-terminus: 4-diphosphocytidyl-2-C-methyl-D-erythritol kinase (280 aa).

Lysine 11 is a catalytic residue. 95-105 (PVGAGLGGGSS) contributes to the ATP binding site. Aspartate 137 is an active-site residue.

Belongs to the GHMP kinase family. IspE subfamily.

It carries out the reaction 4-CDP-2-C-methyl-D-erythritol + ATP = 4-CDP-2-C-methyl-D-erythritol 2-phosphate + ADP + H(+). It participates in isoprenoid biosynthesis; isopentenyl diphosphate biosynthesis via DXP pathway; isopentenyl diphosphate from 1-deoxy-D-xylulose 5-phosphate: step 3/6. In terms of biological role, catalyzes the phosphorylation of the position 2 hydroxy group of 4-diphosphocytidyl-2C-methyl-D-erythritol. The polypeptide is 4-diphosphocytidyl-2-C-methyl-D-erythritol kinase (Citrifermentans bemidjiense (strain ATCC BAA-1014 / DSM 16622 / JCM 12645 / Bem) (Geobacter bemidjiensis)).